We begin with the raw amino-acid sequence, 90 residues long: Non-structural protein NS-S (90 aa).

The interval 4 to 29 is nucleolar signal; sequence KLSLPGKNLKMQKRRWKPTRMMLTRA.

Belongs to the hantavirus NS-S protein family. Interacts with host MAVS; this interaction may reduce MAVS ubiquitination.

The protein localises to the host cytoplasm. It is found in the host perinuclear region. Its subcellular location is the host nucleus. Functionally, antagonizes host type-I IFN signaling pathway. The polypeptide is Non-structural protein NS-S (N) (Homo sapiens (Human)).